Reading from the N-terminus, the 686-residue chain is Aminodeoxychorismate synthase (686 aa).

A Glutamine amidotransferase type-1 domain is found at 2 to 194 (RTLLIDNYDS…RDLALAHHRA (193 aa)). The active-site Nucleophile is the C81. Residues H168 and E170 contribute to the active site. The segment at 233–686 (LDSSSVLEGA…LDGSAVAGAR (454 aa)) is PABB component.

The protein in the C-terminal section; belongs to the anthranilate synthase component I family.

The catalysed reaction is chorismate + L-glutamine = 4-amino-4-deoxychorismate + L-glutamate. Its pathway is antibiotic biosynthesis. Functionally, involved in chloramphenicol biosynthesis. Catalyzes the biosynthesis of 4-amino-4-deoxychorismate (ADC) from chorismate and glutamine. The protein is Aminodeoxychorismate synthase of Streptomyces venezuelae (strain ATCC 10712 / CBS 650.69 / DSM 40230 / JCM 4526 / NBRC 13096 / PD 04745).